The chain runs to 155 residues: Endoribonuclease YbeY (155 aa).

Positions 113, 117, and 123 each coordinate Zn(2+).

The protein belongs to the endoribonuclease YbeY family. Zn(2+) serves as cofactor.

The protein resides in the cytoplasm. In terms of biological role, single strand-specific metallo-endoribonuclease involved in late-stage 70S ribosome quality control and in maturation of the 3' terminus of the 16S rRNA. In Ureaplasma urealyticum serovar 10 (strain ATCC 33699 / Western), this protein is Endoribonuclease YbeY.